Here is a 794-residue protein sequence, read N- to C-terminus: DNA ligase (794 aa).

NAD(+) contacts are provided by residues 35–39 (DAEYD), 84–85 (SL), and Glu126. Catalysis depends on Lys128, which acts as the N6-AMP-lysine intermediate. Residues Arg149, Glu186, Lys302, and Lys326 each contribute to the NAD(+) site. Cys420, Cys423, Cys450, and Cys456 together coordinate Zn(2+). In terms of domain architecture, BRCT spans 711 to 794 (VEGLPLAGQT…KLFDEHGVAR (84 aa)).

The protein belongs to the NAD-dependent DNA ligase family. LigA subfamily. Mg(2+) is required as a cofactor. It depends on Mn(2+) as a cofactor.

It catalyses the reaction NAD(+) + (deoxyribonucleotide)n-3'-hydroxyl + 5'-phospho-(deoxyribonucleotide)m = (deoxyribonucleotide)n+m + AMP + beta-nicotinamide D-nucleotide.. DNA ligase that catalyzes the formation of phosphodiester linkages between 5'-phosphoryl and 3'-hydroxyl groups in double-stranded DNA using NAD as a coenzyme and as the energy source for the reaction. It is essential for DNA replication and repair of damaged DNA. This chain is DNA ligase, found in Pseudomonas aeruginosa (strain LESB58).